The following is a 269-amino-acid chain: Undecaprenyl-diphosphatase (269 aa).

Helical transmembrane passes span 4–24 (IELWTAVLAGVVQGITEWLPI), 50–70 (LWLHAGTLLAVLLRFGVPYWL), 86–106 (LFAIVATVCTAVVGLPVYKVL), 113–133 (ATGDAVQMAIGGALIVTGLLL), 146–166 (VNVVDAVIVGLGQGFSVIPGI), 186–206 (AVWLSFYLAGPAMLGATALEL), 220–240 (WMVTAIGVSFVVSLICMEVLL), and 246–266 (LDFSKVCLLLGGIALLVPLAA).

It belongs to the UppP family.

The protein localises to the cell membrane. The enzyme catalyses di-trans,octa-cis-undecaprenyl diphosphate + H2O = di-trans,octa-cis-undecaprenyl phosphate + phosphate + H(+). Functionally, catalyzes the dephosphorylation of undecaprenyl diphosphate (UPP). In Methanopyrus kandleri (strain AV19 / DSM 6324 / JCM 9639 / NBRC 100938), this protein is Undecaprenyl-diphosphatase.